We begin with the raw amino-acid sequence, 538 residues long: Telomerase Cajal body protein 1 (538 aa).

Residues M1–D53 are disordered. Phosphoserine occurs at positions 27 and 87. A disordered region spans residues E92–D128. Residues S113–D128 show a composition bias toward acidic residues. 6 WD repeats span residues A154 to T194, E210 to S255, N260 to E301, G311 to G352, G353 to W393, and V399 to S438. Disordered stretches follow at residues Q471–P491 and C509–I538. T478 carries the post-translational modification Phosphothreonine. S480 is subject to Phosphoserine. The span at R529–I538 shows a compositional bias: gly residues.

The protein belongs to the TCAB1 family. In terms of assembly, component of the telomerase holoenzyme complex composed of one molecule of TERT, one molecule of WRAP53/TCAB1, two molecules of H/ACA ribonucleoprotein complex subunits DKC1, NOP10, NHP2 and GAR1, and a telomerase RNA template component (TERC). The telomerase holoenzyme complex is associated with TEP1, SMG6/EST1A and POT1. Interacts with the chaperonin-containing T-complex (TRiC) complex; which mediates the folding of WRAP53/TCAB1. Interacts with COIL. Interacts with SMN1. Interacts with RNF8. Interacts with histone H2AX. As to expression, preferentially expressed in testis.

It localises to the nucleus. Its subcellular location is the cajal body. The protein localises to the chromosome. The protein resides in the telomere. Its function is as follows. RNA chaperone that plays a key role in telomere maintenance and RNA localization to Cajal bodies. Specifically recognizes and binds the Cajal body box (CAB box) present in both small Cajal body RNAs (scaRNAs) and telomerase RNA template component (TERC). Essential component of the telomerase holoenzyme complex, a ribonucleoprotein complex essential for the replication of chromosome termini that elongates telomeres in most eukaryotes. In the telomerase holoenzyme complex, required to stimulate the catalytic activity of the complex. Acts by specifically binding the CAB box of the TERC RNA and controlling the folding of the CR4/CR5 region of the TERC RNA, a critical step for telomerase activity. In addition, also controls telomerase holoenzyme complex localization to Cajal body. During S phase, required for delivery of TERC to telomeres during S phase and for telomerase activity. In addition to its role in telomere maintenance, also required for Cajal body formation, probably by mediating localization of scaRNAs to Cajal bodies. Also plays a role in DNA repair: relocalizes to sites of DNA double-strand breaks in response to DNA damage and promotes the repair of DNA double-strand breaks. Acts by recruiting the ubiquitin ligase RNF8 to DNA breaks and promote both homologous recombination (HR) and non-homologous end joining (NHEJ). This Mesocricetus auratus (Golden hamster) protein is Telomerase Cajal body protein 1.